The primary structure comprises 160 residues: Ureidoglycolate lyase (160 aa).

This sequence belongs to the ureidoglycolate lyase family. As to quaternary structure, homodimer. Ni(2+) serves as cofactor.

It catalyses the reaction (S)-ureidoglycolate = urea + glyoxylate. It participates in nitrogen metabolism; (S)-allantoin degradation. In terms of biological role, catalyzes the catabolism of the allantoin degradation intermediate (S)-ureidoglycolate, generating urea and glyoxylate. Involved in the anaerobic utilization of allantoin as sole nitrogen source. Reinforces the induction of genes involved in the degradation of allantoin and glyoxylate by producing glyoxylate. This chain is Ureidoglycolate lyase, found in Escherichia coli O6:H1 (strain CFT073 / ATCC 700928 / UPEC).